The following is a 517-amino-acid chain: Nicotine N-demethylase CYP82E4 (517 aa).

Residues 2-22 traverse the membrane as a helical segment; sequence VFPIEAIVGLVTFTFLFFFLW. A Glycyl lysine isopeptide (Lys-Gly) (interchain with G-Cter in ubiquitin) cross-link involves residue Lys-254. Cys-457 serves as a coordination point for heme.

Belongs to the cytochrome P450 family. CYP82E2 subfamily. The cofactor is heme. As to expression, expressed at low levels in green leaves.

The protein localises to the membrane. It catalyses the reaction (S)-nicotine + reduced [NADPH--hemoprotein reductase] + O2 = (S)-nornicotine + formaldehyde + oxidized [NADPH--hemoprotein reductase] + H2O + H(+). It functions in the pathway alkaloid biosynthesis; nicotine biosynthesis. Involved in the biosynthesis of pyridine alkaloid natural products, leading mainly to the production of anabasine, anatabine, nicotine and nornicotine, effective deterrents against herbivores with antiparasitic and pesticide properties (neurotoxins); nornicotine serves as the precursor in the synthesis of the carcinogen compound N'-nitrosonornicotine (NNN). Catalyzes the demethylation of nicotine to form nornicotine. This chain is Nicotine N-demethylase CYP82E4, found in Nicotiana tabacum (Common tobacco).